A 118-amino-acid polypeptide reads, in one-letter code: Secreted RxLR effector protein 143 (118 aa).

The first 18 residues, 1–18 (MRHCAFLFRLFLIGYSCS), serve as a signal peptide directing secretion. A compositionally biased stretch (basic and acidic residues) spans 35–65 (DELPRAEQWDSDGKRILQADDPEHIPTEERG). The segment at 35 to 66 (DELPRAEQWDSDGKRILQADDPEHIPTEERGI) is disordered. Positions 49–64 (RILQADDPEHIPTEER) match the RxLR-dEER motif.

Belongs to the RxLR effector family.

It is found in the secreted. The protein localises to the host cell membrane. Functionally, secreted effector that completely suppresses the host cell death induced by cell death-inducing proteins. This Plasmopara viticola (Downy mildew of grapevine) protein is Secreted RxLR effector protein 143.